The following is a 627-amino-acid chain: (R)-linalool synthase, chloroplastic (627 aa).

Residues 1 to 21 (MAFVSIAPLASRCCVHKSFVS) constitute a chloroplast transit peptide. Positions 378, 382, and 530 each coordinate Mg(2+). The short motif at 378–382 (DDIYD) is the DDXXD motif element.

Belongs to the terpene synthase family. Tpsd subfamily. The cofactor is Mg(2+). Mn(2+) serves as cofactor.

Its subcellular location is the plastid. It is found in the chloroplast. The catalysed reaction is (2E)-geranyl diphosphate + H2O = (R)-linalool + diphosphate. The protein operates within terpene metabolism; oleoresin biosynthesis. Functionally, terpene synthase (TPS) involved in the biosynthesis of monoterpene natural products included in conifer oleoresin secretions and volatile emissions; these compounds contribute to biotic and abiotic stress defense against herbivores and pathogens. Catalyzes the conversion of (2E)-geranyl diphosphate (GPP) to (R)-linalool. In Picea glauca (White spruce), this protein is (R)-linalool synthase, chloroplastic.